The sequence spans 354 residues: Hydrophobic dipeptide epimerase (354 aa).

Substrate contacts are provided by residues Thr-134, Lys-159, and 159-161 (KIK). A Mg(2+)-binding site is contributed by Asp-189. A substrate-binding site is contributed by Asn-191. Positions 215 and 240 each coordinate Mg(2+). Substrate contacts are provided by residues Lys-264, 292-295 (CMAE), and 318-320 (DLD).

This sequence belongs to the mandelate racemase/muconate lactonizing enzyme family. Requires Mg(2+) as cofactor.

In terms of biological role, catalyzes the epimerization of L-Ile-L-Tyr to L-Ile-D-Tyr (in vitro). Catalyzes the epimerization of dipeptides, with a preference for substrates with a hydrophobic or basic amino acid in the first position, followed by an aromatic residue in the second position. Has epimerase activity with L-Ile-L-Tyr, L-Val-L-Tyr and L-Arg-L-Tyr (in vitro). In Enterococcus faecalis (strain ATCC 700802 / V583), this protein is Hydrophobic dipeptide epimerase.